Here is a 627-residue protein sequence, read N- to C-terminus: Xaa-Pro aminopeptidase 1 (627 aa).

2 residues coordinate a peptide: R88 and H405. Mn(2+) is bound by residues D424, D435, and H498. A peptide is bound by residues H498, H507, and E533. E533 and E547 together coordinate Mn(2+).

This sequence belongs to the peptidase M24B family. As to quaternary structure, homodimer. It depends on Mn(2+) as a cofactor.

Its subcellular location is the cytoplasm. The protein resides in the cytosol. It carries out the reaction Release of any N-terminal amino acid, including proline, that is linked to proline, even from a dipeptide or tripeptide.. Its function is as follows. Metalloaminopeptidase that catalyzes the removal of a penultimate prolyl residue from the N-termini of peptides, such as Arg-Pro-Pro. This Dictyostelium discoideum (Social amoeba) protein is Xaa-Pro aminopeptidase 1 (xpnpep1).